We begin with the raw amino-acid sequence, 194 residues long: Large ribosomal subunit protein bL12m (194 aa).

Residues 1 to 33 (MSLRILAKRSSSIWMKTRVTPALISPITITTRF) constitute a mitochondrion transit peptide. The N-linked (GlcNAc...) asparagine glycan is linked to N34. The interval 101 to 120 (AGNVPSSTGEAGSGAEEEAK) is disordered. Residues 105–114 (PSSTGEAGSG) show a composition bias toward low complexity.

The protein belongs to the bacterial ribosomal protein bL12 family. In terms of assembly, component of the mitochondrial large ribosomal subunit (mt-LSU). Mature yeast 74S mitochondrial ribosomes consist of a small (37S) and a large (54S) subunit. The 37S small subunit contains a 15S ribosomal RNA (15S mt-rRNA) and 34 different proteins. The 54S large subunit contains a 21S rRNA (21S mt-rRNA) and 46 different proteins. N-glycosylated.

Its subcellular location is the mitochondrion. In terms of biological role, component of the mitochondrial ribosome (mitoribosome), a dedicated translation machinery responsible for the synthesis of mitochondrial genome-encoded proteins, including at least some of the essential transmembrane subunits of the mitochondrial respiratory chain. The mitoribosomes are attached to the mitochondrial inner membrane and translation products are cotranslationally integrated into the membrane. This chain is Large ribosomal subunit protein bL12m (MNP1), found in Saccharomyces cerevisiae (strain ATCC 204508 / S288c) (Baker's yeast).